Reading from the N-terminus, the 309-residue chain is Homoserine kinase (309 aa).

88 to 98 (PLARGLGSSAA) is an ATP binding site.

The protein belongs to the GHMP kinase family. Homoserine kinase subfamily.

The protein localises to the cytoplasm. The enzyme catalyses L-homoserine + ATP = O-phospho-L-homoserine + ADP + H(+). It functions in the pathway amino-acid biosynthesis; L-threonine biosynthesis; L-threonine from L-aspartate: step 4/5. Catalyzes the ATP-dependent phosphorylation of L-homoserine to L-homoserine phosphate. The protein is Homoserine kinase of Halalkalibacterium halodurans (strain ATCC BAA-125 / DSM 18197 / FERM 7344 / JCM 9153 / C-125) (Bacillus halodurans).